A 932-amino-acid polypeptide reads, in one-letter code: Glycine dehydrogenase (decarboxylating) (932 aa).

Residue K685 is modified to N6-(pyridoxal phosphate)lysine.

This sequence belongs to the GcvP family. As to quaternary structure, the glycine cleavage system is composed of four proteins: P, T, L and H. Pyridoxal 5'-phosphate serves as cofactor.

The catalysed reaction is N(6)-[(R)-lipoyl]-L-lysyl-[glycine-cleavage complex H protein] + glycine + H(+) = N(6)-[(R)-S(8)-aminomethyldihydrolipoyl]-L-lysyl-[glycine-cleavage complex H protein] + CO2. In terms of biological role, the glycine cleavage system catalyzes the degradation of glycine. The P protein binds the alpha-amino group of glycine through its pyridoxal phosphate cofactor; CO(2) is released and the remaining methylamine moiety is then transferred to the lipoamide cofactor of the H protein. The protein is Glycine dehydrogenase (decarboxylating) of Brucella abortus (strain S19).